The sequence spans 394 residues: Elongation factor Tu (394 aa).

In terms of domain architecture, tr-type G spans 10-204 (KPHVNVGTIG…ALDSYIPEPE (195 aa)). The interval 19–26 (GHVDHGKT) is G1. Position 19–26 (19–26 (GHVDHGKT)) interacts with GTP. Residue Thr-26 participates in Mg(2+) binding. The interval 60 to 64 (GITIS) is G2. The segment at 81-84 (DCPG) is G3. GTP-binding positions include 81 to 85 (DCPGH) and 136 to 139 (NKCD). The G4 stretch occupies residues 136-139 (NKCD). A G5 region spans residues 174 to 176 (SAL).

This sequence belongs to the TRAFAC class translation factor GTPase superfamily. Classic translation factor GTPase family. EF-Tu/EF-1A subfamily. As to quaternary structure, monomer.

It localises to the cytoplasm. It catalyses the reaction GTP + H2O = GDP + phosphate + H(+). In terms of biological role, GTP hydrolase that promotes the GTP-dependent binding of aminoacyl-tRNA to the A-site of ribosomes during protein biosynthesis. The chain is Elongation factor Tu from Alteromonas mediterranea (strain DSM 17117 / CIP 110805 / LMG 28347 / Deep ecotype).